The chain runs to 295 residues: Indole-3-glycerol phosphate synthase (295 aa).

Belongs to the TrpC family.

The catalysed reaction is 1-(2-carboxyphenylamino)-1-deoxy-D-ribulose 5-phosphate + H(+) = (1S,2R)-1-C-(indol-3-yl)glycerol 3-phosphate + CO2 + H2O. It participates in amino-acid biosynthesis; L-tryptophan biosynthesis; L-tryptophan from chorismate: step 4/5. This chain is Indole-3-glycerol phosphate synthase, found in Prochlorococcus marinus (strain MIT 9211).